Reading from the N-terminus, the 98-residue chain is Peptide YY (98 aa).

Residues 1 to 28 (MVAVRRPWPVTVAMLLILLACLGALVDA) form the signal peptide. Ser41 bears the Phosphoserine mark. The residue at position 64 (Tyr64) is a Tyrosine amide. The propeptide occupies 68–98 (DVPAALFSKLLFTDDSDSENLPFRPEGLDQW).

This sequence belongs to the NPY family. Post-translationally, the peptide YY form is cleaved at Pro-30 by the prolyl endopeptidase FAP (seprase) activity (in vitro) to generate peptide YY(3-36).

It is found in the secreted. This gut peptide inhibits exocrine pancreatic secretion, has a vasoconstrictory action and inhibitis jejunal and colonic mobility. The protein is Peptide YY (Pyy) of Mus musculus (Mouse).